Consider the following 765-residue polypeptide: Palmitoyltransferase ZDHHC8 (765 aa).

Over 1–13 the chain is Cytoplasmic; sequence MPRSPGTRLKPAK. A helical transmembrane segment spans residues 14–34; the sequence is YIPVATAAALLVGSSTLFFVF. Over 35-52 the chain is Lumenal; the sequence is TCPWLTRAVSPAVPVYNG. A helical membrane pass occupies residues 53–73; sequence IIFLFVLANFSMATFMDPGVF. Residues 74–148 lie on the Cytoplasmic side of the membrane; sequence PRADEDEDKE…NCIGRRNYRY (75 aa). The DHHC domain maps to 104-154; the sequence is KWCATCHFYRPPRCSHCSVCDNCVEDFDHHCPWVNNCIGRRNYRYFFLFLL. The S-palmitoyl cysteine intermediate role is filled by C134. A helical transmembrane segment spans residues 149–169; sequence FFLFLLSLSAHMVGVVAFGLV. Topologically, residues 170 to 190 are lumenal; it reads YVLNHAEGLGAAHTTITMAVM. A helical membrane pass occupies residues 191–211; it reads CVAGLFFIPVIGLTGFHVVLV. At 212–765 the chain is on the cytoplasmic side; that stretch reads TRGRTTNEQV…VGGTTYEISV (554 aa). Positions 293 to 352 are disordered; it reads GLGRSKSKGSLDRLDEKPLDLGPPLPPKIEAGTFSSDLQTPRPGSAESALSVQRTSPPTP. Basic and acidic residues predominate over residues 301-311; that stretch reads GSLDRLDEKPL. S337 is modified (phosphoserine). R441 carries the omega-N-methylarginine modification. Residues 509-540 form a disordered region; the sequence is LHPGATGDPPRPLPRSFSPVLGPRPREPSPVR. Residues S606, S627, S675, S682, S725, and S743 each carry the phosphoserine modification. The segment at 613–747 is disordered; that stretch reads GPGFGGARNP…PGPSASPTRH (135 aa). Residues 622-653 are compositionally biased toward low complexity; the sequence is PALQTSLSSLSSSVSRAPRTSSSSLQADQASS.

Belongs to the DHHC palmitoyltransferase family. ERF2/ZDHHC9 subfamily. In terms of tissue distribution, widely expressed.

The protein localises to the golgi apparatus membrane. The protein resides in the mitochondrion membrane. The enzyme catalyses L-cysteinyl-[protein] + hexadecanoyl-CoA = S-hexadecanoyl-L-cysteinyl-[protein] + CoA. Palmitoyltransferase that catalyzes the addition of palmitate onto various protein substrates and therefore functions in several unrelated biological processes. Through the palmitoylation of ABCA1 regulates the localization of the transporter to the plasma membrane and thereby regulates its function in cholesterol and phospholipid efflux. Could also pamitoylate the D(2) dopamine receptor DRD2 and regulate its stability and localization to the plasma membrane. Could also play a role in glutamatergic transmission. Functionally, (Microbial infection) Able to palmitoylate SARS coronavirus-2/SARS-CoV-2 spike protein following its synthesis in the endoplasmic reticulum (ER). In the infected cell, promotes spike biogenesis by protecting it from premature ER degradation, increases half-life and controls the lipid organization of its immediate membrane environment. Once the virus has formed, spike palmitoylation controls fusion with the target cell. The sequence is that of Palmitoyltransferase ZDHHC8 from Homo sapiens (Human).